We begin with the raw amino-acid sequence, 802 residues long: Nuclear polyadenylated RNA-binding protein 3 (802 aa).

2 disordered regions span residues M1–T174 and A252–F293. Low complexity predominate over residues S22–S34. Residues D37–K73 show a composition bias toward acidic residues. The residue at position 86 (T86) is a Phosphothreonine. 2 stretches are compositionally biased toward acidic residues: residues D101 to N139 and A149 to D158. The span at K159–T174 shows a compositional bias: basic and acidic residues. Positions S260 to S276 are enriched in low complexity. Basic and acidic residues predominate over residues N277–F293. Positions S330–S401 constitute an RRM domain. Residue T451 is modified to Phosphothreonine. Disordered stretches follow at residues I571–Q675 and M717–K802. The span at P575–Q590 shows a compositional bias: pro residues. Residues Y593 to G614 are compositionally biased toward low complexity. A compositionally biased stretch (polar residues) spans M632–S642. 2 stretches are compositionally biased toward low complexity: residues Q651 to A661 and M717 to S738. Polar residues predominate over residues T745–A754. Over residues S757–Q769 the composition is skewed to pro residues. A compositionally biased stretch (low complexity) spans Q770–P785.

The protein resides in the nucleus. Its subcellular location is the nucleoplasm. May be required for packaging pre-mRNAs into ribonucleoprotein structures amenable to efficient nuclear RNA processing. Binds to poly(A)+ RNA. Appears to act in the maintenance of CLN3 mRNA levels. In Saccharomyces cerevisiae (strain ATCC 204508 / S288c) (Baker's yeast), this protein is Nuclear polyadenylated RNA-binding protein 3 (NAB3).